A 359-amino-acid polypeptide reads, in one-letter code: Type-1 angiotensin II receptor (359 aa).

The Extracellular segment spans residues 1–25; sequence MMLNSSTEDGIKRIQDDCPKAGRHN. N-linked (GlcNAc...) asparagine glycosylation occurs at asparagine 4. Positions 15 and 17 each coordinate angiotensin II. Disulfide bonds link cysteine 18-cysteine 274 and cysteine 101-cysteine 180. Residues 26–55 traverse the membrane as a helical segment; sequence YIFVMIPTLYSIIFVVGIFGNSLAVIVIYF. The Cytoplasmic portion of the chain corresponds to 56–61; that stretch reads YMKLKT. The helical transmembrane segment at 62–89 threads the bilayer; sequence VASVFLLNLALADLCFLLTLPLWAVYTA. Residues 90–98 are Extracellular-facing; the sequence is MEYRWPFGN. A helical membrane pass occupies residues 99-125; that stretch reads YLCKIASASVSFNLYASVFLLTCLSID. Over 126–141 the chain is Cytoplasmic; that stretch reads RYLAIVHPMKSRLRRT. A helical membrane pass occupies residues 142-165; the sequence is MLVAKVTCIIIWLLAGLASLPAII. Over 166-190 the chain is Extracellular; sequence HRNVFFIENTNITVCAFHYESQNST. Arginine 167 lines the angiotensin II pocket. N-linked (GlcNAc...) asparagine glycosylation is present at asparagine 176. 3 residues coordinate angiotensin II: phenylalanine 182, histidine 183, and tyrosine 184. Asparagine 188 is a glycosylation site (N-linked (GlcNAc...) asparagine). Residues 191–216 form a helical membrane-spanning segment; the sequence is LPIGLGLTKNILGFLFPFLIILTSYT. Residue lysine 199 participates in angiotensin II binding. Topologically, residues 217–239 are cytoplasmic; the sequence is LIWKALKKAYEIQKNKPRNDDIF. The chain crosses the membrane as a helical span at residues 240 to 268; that stretch reads KIIMAIVLFFFFSWVPHQIFTFLDVLIQL. The Extracellular segment spans residues 269 to 278; sequence GVIHDCRIAD. The chain crosses the membrane as a helical span at residues 279–304; the sequence is IVDTAMPITICIAYFNNCLNPLFYGF. Topologically, residues 305–359 are cytoplasmic; the sequence is LGKKFKKYFLQLLKYIPPKAKSHSNLSTKMSTLSYRPSDNVSSSSKKPVPCFEVE. A compositionally biased stretch (polar residues) spans 335-350; the sequence is STLSYRPSDNVSSSSK. A disordered region spans residues 335–359; it reads STLSYRPSDNVSSSSKKPVPCFEVE. Cysteine 355 carries S-palmitoyl cysteine lipidation.

The protein belongs to the G-protein coupled receptor 1 family. In terms of assembly, interacts with MAS1. Interacts with ARRB1. Interacts with FLNA (via filamin repeat 21); increases PKA-mediated phosphorylation of FLNA. Post-translationally, C-terminal Ser or Thr residues may be phosphorylated.

The protein resides in the cell membrane. Receptor for angiotensin II, a vasoconstricting peptide, which acts as a key regulator of blood pressure and sodium retention by the kidney. The activated receptor in turn couples to G-alpha proteins G(q) (GNAQ, GNA11, GNA14 or GNA15) and thus activates phospholipase C and increases the cytosolic Ca(2+) concentrations, which in turn triggers cellular responses such as stimulation of protein kinase C. The chain is Type-1 angiotensin II receptor (AGTR1) from Oryctolagus cuniculus (Rabbit).